Reading from the N-terminus, the 306-residue chain is Ornithine carbamoyltransferase (306 aa).

Residues S50–T53, Q77, R101, and H128–Q131 contribute to the carbamoyl phosphate site. L-ornithine contacts are provided by residues N160, D224, and S228–M229. Residues C261–L262 and R289 contribute to the carbamoyl phosphate site.

Belongs to the aspartate/ornithine carbamoyltransferase superfamily. OTCase family.

The protein localises to the cytoplasm. It carries out the reaction carbamoyl phosphate + L-ornithine = L-citrulline + phosphate + H(+). The protein operates within amino-acid biosynthesis; L-arginine biosynthesis; L-arginine from L-ornithine and carbamoyl phosphate: step 1/3. Its function is as follows. Reversibly catalyzes the transfer of the carbamoyl group from carbamoyl phosphate (CP) to the N(epsilon) atom of ornithine (ORN) to produce L-citrulline. This chain is Ornithine carbamoyltransferase, found in Aquifex aeolicus (strain VF5).